We begin with the raw amino-acid sequence, 197 residues long: RNA polymerase II subunit A C-terminal domain phosphatase ssup-72 (197 aa).

Serine 39 is modified (phosphoserine).

Belongs to the SSU72 phosphatase family. May interact with synd-1 (via C-terminus); the interaction may prevent ssup-72 binding to RNA polymerase II ama-1. May interact with RNA polymerase II ama-1. In terms of processing, may be phosphorylated by kin-20. Expressed in epidermis, intestine and nervous system.

It is found in the nucleus. It carries out the reaction O-phospho-L-seryl-[protein] + H2O = L-seryl-[protein] + phosphate. The enzyme catalyses O-phospho-L-threonyl-[protein] + H2O = L-threonyl-[protein] + phosphate. Its function is as follows. Protein phosphatase that dephosphorylates 'Ser-5' of the heptad repeats YSPTSPS in the C-terminal domain of the large RNA polymerase II subunit ama-1. By regulating the phosphorylation status of ama-1 and thus ama-1 binding to specific polyadenylation sites, regulates alternative polyadenylation of pre-mRNAs, including unc-44 and dlk-1 mRNAs. This results in the tissue-specific expression of unc-44 isoforms. This Caenorhabditis elegans protein is RNA polymerase II subunit A C-terminal domain phosphatase ssup-72.